Consider the following 258-residue polypeptide: Transcription cofactor vestigial-like protein 1 (258 aa).

Composition is skewed to polar residues over residues 55 to 65 (PQELTPSSQSE) and 74 to 87 (SMSP…SPWT). A disordered region spans residues 55–93 (PQELTPSSQSEGVMLKNDDSMSPNQWRYSSPWTKPQPEV).

It belongs to the vestigial family. In terms of assembly, interacts with TEFs.

Its subcellular location is the nucleus. Functionally, may act as a specific coactivator for the mammalian TEFs. This chain is Transcription cofactor vestigial-like protein 1 (VGLL1), found in Homo sapiens (Human).